The chain runs to 142 residues: Large ribosomal subunit protein uL13 (142 aa).

Belongs to the universal ribosomal protein uL13 family. In terms of assembly, part of the 50S ribosomal subunit.

This protein is one of the early assembly proteins of the 50S ribosomal subunit, although it is not seen to bind rRNA by itself. It is important during the early stages of 50S assembly. The sequence is that of Large ribosomal subunit protein uL13 from Aromatoleum aromaticum (strain DSM 19018 / LMG 30748 / EbN1) (Azoarcus sp. (strain EbN1)).